The chain runs to 829 residues: G-type lectin S-receptor-like serine/threonine-protein kinase At1g34300 (829 aa).

The signal sequence occupies residues 1-25; it reads MAVKTPFLKLLPLLLLLLHFPFSFS. Bulb-type lectin domains lie at 26–140 and 143–260; these read TIPL…SSFD and TDTI…PVNA. Over 26–421 the chain is Extracellular; the sequence is TIPLGSVIYA…KGDDNNSKVH (396 aa). 8 N-linked (GlcNAc...) asparagine glycosylation sites follow: asparagine 46, asparagine 98, asparagine 130, asparagine 151, asparagine 172, asparagine 178, asparagine 189, and asparagine 195. One can recognise an EGF-like domain in the interval 264–301; the sequence is AVDQCLVYGYCGNFGICSYNDTNPICSCPSRNFDFVDV. 5 cysteine pairs are disulfide-bonded: cysteine 268–cysteine 280, cysteine 274–cysteine 289, cysteine 317–cysteine 399, cysteine 350–cysteine 373, and cysteine 354–cysteine 360. Asparagine 283 and asparagine 320 each carry an N-linked (GlcNAc...) asparagine glycan. Residues 317–399 enclose the Apple domain; the sequence is CSGNTTMLDL…VPSTSYVKVC (83 aa). N-linked (GlcNAc...) asparagine glycosylation is present at asparagine 416. A helical membrane pass occupies residues 422 to 442; the sequence is LWIVAVAVIAGLLGLVAVEIG. Residues 443–829 lie on the Cytoplasmic side of the membrane; it reads LWWCCCRKNP…RISEGSMLGS (387 aa). The Protein kinase domain maps to 484–759; the sequence is KSFKEKLGAG…GKVVQMLEGI (276 aa). Residues 490 to 498 and lysine 512 contribute to the ATP site; that span reads LGAGGFGTV. The residue at position 532 (serine 532) is a Phosphoserine. Residues 572–589 form a caM-binding region; that stretch reads DSAKFLTWEYRFNIALGT. Aspartate 608 functions as the Proton acceptor in the catalytic mechanism. Phosphoserine occurs at positions 625 and 799.

The protein belongs to the protein kinase superfamily. Ser/Thr protein kinase family.

It is found in the cell membrane. The enzyme catalyses L-seryl-[protein] + ATP = O-phospho-L-seryl-[protein] + ADP + H(+). It catalyses the reaction L-threonyl-[protein] + ATP = O-phospho-L-threonyl-[protein] + ADP + H(+). This is G-type lectin S-receptor-like serine/threonine-protein kinase At1g34300 from Arabidopsis thaliana (Mouse-ear cress).